We begin with the raw amino-acid sequence, 79 residues long: Polcalcin Bra r 1 (79 aa).

EF-hand domains are found at residues 1–36 (MADA…LGSV) and 39–71 (DDVT…NPGL). Ca(2+)-binding residues include Asp-14, Asp-16, Asp-18, Lys-20, Glu-25, Asp-49, Asp-51, Asp-53, Asn-55, and Glu-60.

This is Polcalcin Bra r 1 from Brassica campestris (Field mustard).